The primary structure comprises 698 residues: Na(+)/H(+) antiporter NhaS5 (698 aa).

Helical transmembrane passes span 10 to 30 (SNPLIDFTILLLVTLILPPIF), 35 to 55 (LPGLVGLLFAGIVLGKSGLGV), 65 to 85 (LFTDIGKIYLMFVAGLEIDMV), 100 to 120 (LTFAVPLLTGLAVGLTFGYSF), 121 to 141 (NASVLLGSLFASHTLLGYPIV), 156 to 176 (IGATIFTDIAALLVLAICISI), 184 to 204 (AGLVVQLVAIAVYSALVLIGF), 222 to 242 (QFLFVLLAVFLASVGSELINV), 275 to 295 (LFIPFFFIGIGLLLDLPAFLV), 300 to 320 (LFPLVVAIVVGLILSKGVAAI), 333 to 353 (GLTMWSLSIPQVAATLAAAVA), and 370 to 390 (VLNTIIVLMLITSIVGPLMTA).

The protein belongs to the monovalent cation:proton antiporter 2 (CPA2) transporter (TC 2.A.37) family.

The protein resides in the membrane. Functionally, na(+)/H(+) antiporter. The sequence is that of Na(+)/H(+) antiporter NhaS5 (nhaS5) from Synechocystis sp. (strain ATCC 27184 / PCC 6803 / Kazusa).